We begin with the raw amino-acid sequence, 961 residues long: IQ motif and SEC7 domain-containing protein 1 (961 aa).

Residues 21 to 113 (SGVEGEAPSS…SLSESYELSS (93 aa)) are disordered. Over residues 29 to 38 (SSETGTSLDS) the composition is skewed to polar residues. 3 positions are modified to phosphoserine: Ser88, Ser104, and Ser106. The region spanning 133-162 (TRHAARTIQTAFRQYQMNKNFERLRSSMSE) is the IQ domain. 3 positions are modified to phosphoserine: Ser179, Ser247, and Ser251. Disordered stretches follow at residues 263-291 (SEEVPASDTARARDTEPKPGLHGMDHRKL), 310-332 (LSPPLPLSQAGDRPSSTESDLRL), and 347-515 (KEDK…DSPA). The segment covering 272–291 (ARARDTEPKPGLHGMDHRKL) has biased composition (basic and acidic residues). 2 stretches are compositionally biased toward basic and acidic residues: residues 364 to 374 (ERPEPRLRVEH) and 428 to 444 (LPREEPELRPRPPRPLE). Low complexity predominate over residues 469–487 (DSINSTSNSNDTINCSSES). 2 positions are modified to phosphoserine: Ser510 and Ser513. The 194-residue stretch at 515-708 (AFSNDVIRKR…IGIYERIRKR (194 aa)) folds into the SEC7 domain. A PH domain is found at 772–864 (HQREIFLFND…LRESVAEVQE (93 aa)). A coiled-coil region spans residues 846-877 (QDRKKFTDDLRESVAEVQEMEKHRIESELEKQ). Ser890 is subject to Phosphoserine. Residue Tyr909 is modified to Phosphotyrosine. Residues 920 to 961 (LSSSLRDLSEAGKRGRRSSAGSLESNVEFQPFQPPQPPVLCS) form a disordered region. Ser922 and Ser923 each carry phosphoserine. A compositionally biased stretch (polar residues) spans 938-947 (SAGSLESNVE). Residues 951–961 (FQPPQPPVLCS) are compositionally biased toward pro residues.

It belongs to the BRAG family. As to quaternary structure, interacts with ARF1 and ARF6. Interacts with GRIA2; the interaction is required for ARF6 activation. Expressed in hippocampus.

It localises to the cytoplasm. It is found in the nucleus. The protein localises to the postsynaptic density. Its subcellular location is the cytoplasmic vesicle. The protein resides in the secretory vesicle. It localises to the synaptic vesicle. Guanine nucleotide exchange factor for ARF1 and ARF6. Guanine nucleotide exchange factor activity is enhanced by lipid binding. Accelerates GTP binding by ARFs of all three classes. Guanine nucleotide exchange protein for ARF6, mediating internalization of beta-1 integrin. Involved in neuronal development. In neurons, plays a role in the control of vesicle formation by endocytoc cargo. Upon long term depression, interacts with GRIA2 and mediates the activation of ARF6 to internalize synaptic AMPAR receptors. The sequence is that of IQ motif and SEC7 domain-containing protein 1 (Iqsec1) from Mus musculus (Mouse).